The primary structure comprises 302 residues: Meiotically up-regulated gene 129 protein (302 aa).

Its function is as follows. Has a role in meiosis. This chain is Meiotically up-regulated gene 129 protein (mug129), found in Schizosaccharomyces pombe (strain 972 / ATCC 24843) (Fission yeast).